A 345-amino-acid chain; its full sequence is Probable aldo-keto reductase 3 (345 aa).

Catalysis depends on Tyr63, which acts as the Proton donor. His130 serves as a coordination point for substrate. 209 to 219 contacts NADP(+); sequence SPLGRGFFASG.

The protein belongs to the aldo/keto reductase family.

The sequence is that of Probable aldo-keto reductase 3 from Arabidopsis thaliana (Mouse-ear cress).